The following is a 181-amino-acid chain: ADP-ribosylation factor 2 (181 aa).

Glycine 2 carries N-myristoyl glycine lipidation. Residues 24–31, 67–71, and 126–129 each bind GTP; these read GLDAAGKT, DVGGQ, and NKQD.

Belongs to the small GTPase superfamily. Arf family.

It is found in the golgi apparatus. In terms of biological role, GTP-binding protein that functions as an allosteric activator of the cholera toxin catalytic subunit, an ADP-ribosyltransferase. Involved in protein trafficking; may modulate vesicle budding and uncoating within the Golgi apparatus. This chain is ADP-ribosylation factor 2 (ARF2), found in Bos taurus (Bovine).